Consider the following 226-residue polypeptide: Chalcone--flavanone isomerase 1 (226 aa).

Residues T52, N117, and T194 each coordinate substrate.

It belongs to the chalcone isomerase family.

It catalyses the reaction a chalcone = a flavanone.. The protein operates within secondary metabolite biosynthesis; flavonoid biosynthesis. In terms of biological role, catalyzes the intramolecular cyclization of bicyclic chalcones into tricyclic (S)-flavanones. Responsible for the isomerization of 4,2',4',6'-tetrahydroxychalcone (also termed chalcone) into naringenin. This is Chalcone--flavanone isomerase 1 (CHI1) from Lotus japonicus (Lotus corniculatus var. japonicus).